Here is a 142-residue protein sequence, read N- to C-terminus: Ninjurin-2 (142 aa).

The tract at residues 1 to 21 is disordered; it reads MESARENIDLQPGSSDPRSQP. The Extracellular segment spans residues 1–60; the sequence is MESARENIDLQPGSSDPRSQPINLNHYATKKSVAESMLDVALFMSNAMRLKAVLEQGPSS. Residues 12-21 show a composition bias toward polar residues; sequence PGSSDPRSQP. Residues 25 to 37 are helix alpha1; the sequence is NHYATKKSVAESM. Residues 38–57 are helix alpha2; it reads LDVALFMSNAMRLKAVLEQG. Residues 61–92 traverse the membrane as a helical segment; that stretch reads HYYTTLVTLISLSLLLQVVIGVLLVVIARLNL. Residues 93 to 96 are Cytoplasmic-facing; sequence NEVE. Residues 97-126 form a helical membrane-spanning segment; sequence KQWRLNQLNNAATILVFFTVVINVFITAFG. Gln103 is a binding site for cholesterol. Topologically, residues 127 to 142 are extracellular; the sequence is AHKTGFLAARASRNPL.

Belongs to the ninjurin family. Homooligomer; in response to stimuli, homooligomerizes into filaments. In contrast to NINJ1, the filament is curved toward the intracellular space, preventing its circularization on a relatively flat membrane to mediate plasma membrane rupture: curvature is caused by cholesterol-binding at the cytoplasmic leaflet. In terms of tissue distribution, widely expressed. In adult, higher expression in the bone marrow and peripheral blood lymphocytes, medium in the lung, lymph node, thyroid, uterus, thymus, spleen, prostate and skeletal muscle, lower in the liver, placenta, brain, heart and kidney. In embryo, higher expression in the thymus, heart and liver, lower in the spleen, lung, brain and kidney.

The protein localises to the cell membrane. Its function is as follows. Its role in unclear. In contrast to NINJ1 paralog, does not mediate plasma membrane rupture (cytolysis) downstream of necroptotic and pyroptotic programmed cell death. While it is able to oligomerize and form filaments, filaments are curved toward the intracellular space, preventing circularization to mediate plasma membrane rupture. May act as a homophilic transmembrane adhesion molecule involved in nerve regeneration. Promotes axonal growth. The protein is Ninjurin-2 of Homo sapiens (Human).